The chain runs to 77 residues: Putative antitoxin VapB3 (77 aa).

Residues Arg-10 to Ala-60 adopt a coiled-coil conformation.

As to quaternary structure, forms a complex with putative toxin VapC3, possibly VapB(2)-VapC(2).

Antitoxin component of a type II toxin-antitoxin (TA) system. This chain is Putative antitoxin VapB3 (vAPb3), found in Pyrobaculum aerophilum (strain ATCC 51768 / DSM 7523 / JCM 9630 / CIP 104966 / NBRC 100827 / IM2).